We begin with the raw amino-acid sequence, 201 residues long: 3-isopropylmalate dehydratase small subunit (201 aa).

It belongs to the LeuD family. LeuD type 1 subfamily. In terms of assembly, heterodimer of LeuC and LeuD.

The enzyme catalyses (2R,3S)-3-isopropylmalate = (2S)-2-isopropylmalate. The protein operates within amino-acid biosynthesis; L-leucine biosynthesis; L-leucine from 3-methyl-2-oxobutanoate: step 2/4. Catalyzes the isomerization between 2-isopropylmalate and 3-isopropylmalate, via the formation of 2-isopropylmaleate. The chain is 3-isopropylmalate dehydratase small subunit from Escherichia fergusonii (strain ATCC 35469 / DSM 13698 / CCUG 18766 / IAM 14443 / JCM 21226 / LMG 7866 / NBRC 102419 / NCTC 12128 / CDC 0568-73).